Here is a 463-residue protein sequence, read N- to C-terminus: Glutamate--tRNA ligase 1 (463 aa).

The 'HIGH' region motif lies at 10–20 (PSPTGFLHIGS). Residues 239–243 (KLSKR) carry the 'KMSKS' region motif. K242 serves as a coordination point for ATP.

It belongs to the class-I aminoacyl-tRNA synthetase family. Glutamate--tRNA ligase type 1 subfamily. Monomer.

Its subcellular location is the cytoplasm. It carries out the reaction tRNA(Glu) + L-glutamate + ATP = L-glutamyl-tRNA(Glu) + AMP + diphosphate. Functionally, catalyzes the attachment of glutamate to tRNA(Glu) in a two-step reaction: glutamate is first activated by ATP to form Glu-AMP and then transferred to the acceptor end of tRNA(Glu). The protein is Glutamate--tRNA ligase 1 of Rickettsia canadensis (strain McKiel).